A 312-amino-acid polypeptide reads, in one-letter code: Ribosomal RNA small subunit methyltransferase H (312 aa).

S-adenosyl-L-methionine contacts are provided by residues 35 to 37 (GGH), Asp55, Asp101, and Gln108. Positions 285–306 (ALKPSEHEVTENSRSRSSVLRV) are disordered. The span at 287-298 (KPSEHEVTENSR) shows a compositional bias: basic and acidic residues.

Belongs to the methyltransferase superfamily. RsmH family.

The protein resides in the cytoplasm. The catalysed reaction is cytidine(1402) in 16S rRNA + S-adenosyl-L-methionine = N(4)-methylcytidine(1402) in 16S rRNA + S-adenosyl-L-homocysteine + H(+). Specifically methylates the N4 position of cytidine in position 1402 (C1402) of 16S rRNA. The chain is Ribosomal RNA small subunit methyltransferase H from Aeromonas salmonicida (strain A449).